A 226-amino-acid polypeptide reads, in one-letter code: Amelogenin (226 aa).

The first 16 residues, 1 to 16 (MGTWILFACLLGTAFA), serve as a signal peptide directing secretion. Position 32 is a phosphoserine (Ser-32). Residues 86–196 (QQHPPSHTTL…LPPQQALPPM (111 aa)) are disordered. Low complexity-rich tracts occupy residues 88–120 (HPPS…MPVP) and 137–182 (PTSQ…SPLH). Pro residues predominate over residues 183-192 (PIQPLPPQQA).

The protein belongs to the amelogenin family.

It localises to the secreted. Its subcellular location is the extracellular space. The protein resides in the extracellular matrix. Plays a role in the biomineralization of teeth. Seems to regulate the formation of crystallites during the secretory stage of tooth enamel development. Thought to play a major role in the structural organization and mineralization of developing enamel. In Cavia porcellus (Guinea pig), this protein is Amelogenin (AMEL).